Here is a 451-residue protein sequence, read N- to C-terminus: 2-succinylbenzoate--CoA ligase (451 aa).

This sequence belongs to the ATP-dependent AMP-binding enzyme family. MenE subfamily.

The enzyme catalyses 2-succinylbenzoate + ATP + CoA = 2-succinylbenzoyl-CoA + AMP + diphosphate. It functions in the pathway quinol/quinone metabolism; 1,4-dihydroxy-2-naphthoate biosynthesis; 1,4-dihydroxy-2-naphthoate from chorismate: step 5/7. It participates in quinol/quinone metabolism; menaquinone biosynthesis. Functionally, converts 2-succinylbenzoate (OSB) to 2-succinylbenzoyl-CoA (OSB-CoA). This Escherichia coli (strain K12) protein is 2-succinylbenzoate--CoA ligase.